Reading from the N-terminus, the 692-residue chain is Elongation factor G (692 aa).

The tr-type G domain occupies 9–284 (HKVRNIGIAA…AVVDYLPAPD (276 aa)). GTP-binding positions include 18 to 25 (AHIDAGKT), 82 to 86 (DTPGH), and 136 to 139 (NKMD).

Belongs to the TRAFAC class translation factor GTPase superfamily. Classic translation factor GTPase family. EF-G/EF-2 subfamily.

It is found in the cytoplasm. Its function is as follows. Catalyzes the GTP-dependent ribosomal translocation step during translation elongation. During this step, the ribosome changes from the pre-translocational (PRE) to the post-translocational (POST) state as the newly formed A-site-bound peptidyl-tRNA and P-site-bound deacylated tRNA move to the P and E sites, respectively. Catalyzes the coordinated movement of the two tRNA molecules, the mRNA and conformational changes in the ribosome. The polypeptide is Elongation factor G (Campylobacter concisus (strain 13826)).